Here is a 707-residue protein sequence, read N- to C-terminus: MAIDKELQFTRNIGIMAHIDAGKTTTSERILFYTGLTHKIGEVHDGAATMDWMEQEQERGITITSAATTAFWNYNNQKYKINLIDTPGHVDFTVEVERSLRILDGAVAAFCAVGGVEPQSETVWRQAEKYNVPRIGYVNKMDRSGANFFEVVRQLREVLGANPCPIQIPIGAEETFKGVVDLVSMKALVWNDETMGAKYDVEDIPAELVGEAEEWRDKMLETLADCDDTLMEKYFDDPSTITEDEIIAALRKGTLAMQINPMLCGSSFKNKGVQTLLDAVCKFLPSPADTPTVEGTDPSDPNKVIERKTSPNEPLCALAFKIATDPYVGRLCFFRVYSGELPAGSYVYNARSEKKERISRLFQMHSNKQNPKEVIGCGDIGAGVGFKDIRTGDTLCDENHPIVLESMDFPDPVIGIAVEPKTQKDLDRLGVGLAKLAEEDPTFRVQTNEDSGQTVISGMGELHLDIIIDRLRREFKVECNQGRPQVSYKEAINDPVELREVYKKQTGGRGKFADIICRVEPADADFEGELQFVDEVKGGNIPKEFIPSIQKGFQRAMKNGVLAGYPLDQLKVTVIDGSFHPVDSDQLSFEICALQAFKNACEKAHPTLMEPIMKLEVVTPEESMGDVIGDLNKRRGQVEGMESSRTGARIVKAKVPLAEMFGYVTALRTITSGRATSTMTFSHYSEVPSTIAKQVLTEAQGRVDLIK.

Residues Q8–A288 enclose the tr-type G domain. Residues A17–T24, D85–H89, and N139–D142 contribute to the GTP site. The disordered stretch occupies residues A288–K308.

This sequence belongs to the TRAFAC class translation factor GTPase superfamily. Classic translation factor GTPase family. EF-G/EF-2 subfamily.

It is found in the cytoplasm. Its function is as follows. Catalyzes the GTP-dependent ribosomal translocation step during translation elongation. During this step, the ribosome changes from the pre-translocational (PRE) to the post-translocational (POST) state as the newly formed A-site-bound peptidyl-tRNA and P-site-bound deacylated tRNA move to the P and E sites, respectively. Catalyzes the coordinated movement of the two tRNA molecules, the mRNA and conformational changes in the ribosome. The protein is Elongation factor G of Porphyromonas gingivalis (strain ATCC 33277 / DSM 20709 / CIP 103683 / JCM 12257 / NCTC 11834 / 2561).